The primary structure comprises 394 residues: 1-deoxy-D-xylulose 5-phosphate reductoisomerase (394 aa).

The NADPH site is built by T14, G15, S16, I17, G40, and N128. K129 contributes to the 1-deoxy-D-xylulose 5-phosphate binding site. E130 contacts NADPH. D154 provides a ligand contact to Mn(2+). The 1-deoxy-D-xylulose 5-phosphate site is built by S155, E156, S180, and H203. E156 provides a ligand contact to Mn(2+). G209 contributes to the NADPH binding site. Positions 216, 221, 222, and 225 each coordinate 1-deoxy-D-xylulose 5-phosphate. E225 provides a ligand contact to Mn(2+).

It belongs to the DXR family. Requires Mg(2+) as cofactor. It depends on Mn(2+) as a cofactor.

The catalysed reaction is 2-C-methyl-D-erythritol 4-phosphate + NADP(+) = 1-deoxy-D-xylulose 5-phosphate + NADPH + H(+). It functions in the pathway isoprenoid biosynthesis; isopentenyl diphosphate biosynthesis via DXP pathway; isopentenyl diphosphate from 1-deoxy-D-xylulose 5-phosphate: step 1/6. Functionally, catalyzes the NADPH-dependent rearrangement and reduction of 1-deoxy-D-xylulose-5-phosphate (DXP) to 2-C-methyl-D-erythritol 4-phosphate (MEP). The chain is 1-deoxy-D-xylulose 5-phosphate reductoisomerase from Xylella fastidiosa (strain M23).